Here is a 197-residue protein sequence, read N- to C-terminus: UPF0637 protein LEUM_0496 (197 aa).

It belongs to the UPF0637 family.

The protein is UPF0637 protein LEUM_0496 of Leuconostoc mesenteroides subsp. mesenteroides (strain ATCC 8293 / DSM 20343 / BCRC 11652 / CCM 1803 / JCM 6124 / NCDO 523 / NBRC 100496 / NCIMB 8023 / NCTC 12954 / NRRL B-1118 / 37Y).